Reading from the N-terminus, the 352-residue chain is Tubby-like F-box protein 10 (352 aa).

Basic and acidic residues predominate over residues 1–11; it reads MAAVREPREEA. Positions 1–23 are disordered; the sequence is MAAVREPREEAAVGEGEGEEEGR. Positions 22 to 78 constitute an F-box domain; it reads GRWGGLLPELVEEVVRRVEASGGERWPARKDLVSCACVCRRWREAAAAVVRPLPESG.

The protein belongs to the TUB family. In terms of tissue distribution, ubiquitous.

The sequence is that of Tubby-like F-box protein 10 (TULP10) from Oryza sativa subsp. japonica (Rice).